The sequence spans 215 residues: Cytochrome b6 (215 aa).

The helical transmembrane segment at 32–52 threads the bilayer; sequence IFYCFGGIVFTCFLVQVATGF. Cys35 serves as a coordination point for heme c. 2 residues coordinate heme b: His86 and His100. 3 consecutive transmembrane segments (helical) span residues 90–110, 116–136, and 186–206; these read ASMMVMMLVLHVFRVYLTGGF, LTWVTGVILAVVTVSFGVTGY, and AHTFVLPLAAAVLMLTHFLMI. Positions 187 and 202 each coordinate heme b.

This sequence belongs to the cytochrome b family. PetB subfamily. As to quaternary structure, the 4 large subunits of the cytochrome b6-f complex are cytochrome b6, subunit IV (17 kDa polypeptide, PetD), cytochrome f and the Rieske protein, while the 4 small subunits are PetG, PetL, PetM and PetN. The complex functions as a dimer. Heme b serves as cofactor. Heme c is required as a cofactor.

It is found in the plastid. The protein localises to the chloroplast thylakoid membrane. In terms of biological role, component of the cytochrome b6-f complex, which mediates electron transfer between photosystem II (PSII) and photosystem I (PSI), cyclic electron flow around PSI, and state transitions. This is Cytochrome b6 from Skeletonema costatum (Marine centric diatom).